The primary structure comprises 1193 residues: MTGQLVQYGRHRQRRSYARISEVLELPNLIEIQTSSYQWFLDEGLREMFQDISPIEDFTGNLSLEFIDYSLGEPKYPVEESKERDVTYSAPLRVKVRLINKETGEVKDQDVFMGDFPIMTDTGTFIINGAERVIVSQLVRSPSVYFSGKVDKNGKKGFTATVIPNRGAWLEYETDAKDVVYVRIDRTRKLPVTVLLRALGFGSDQEILDLIGENEYLRNTLDKDNTENSDKALLEIYERLRPGEPPTVENAKSLLDSRFFDPKRYDLANVGRYKINKKLHIKNRLFNQRLAETLVDPETGEILAEKGQILDRRTLDKVLPYLENGIGFRKLYPNGGVVEDEVTLQSIKIFAPTDQEGEQVINVIGNAYIEEEIKNITPADIISSISYFFNLLHGVGDTDDIDHLGNRRLRSVGELLQNQFRIGLSRMERVVRERMSIQDTNTITPQQLINIRPVIASIKEFFGSSQLSQFMDQTNPLAELTHKRRLSALGPGGLTRERAGMEVRDVHYSHYGRMCPIETPEGPNIGLINSLSSYAKVNRFGFIETPYRRVDPETGKVTGRIDYLTADEEDNYVVAQANARLDDEGAFIDDSIVARFRGENTVVSRNRVDYMDVSPKQVVSAATACIPFLENDDSNRALMGANMQRQAVPLMQPEAPFVGTGMEYVSGKDSGAAVICKHPGIVERVEAKNVWVRRYEEVDGQKVKGNLDKYSLLKFVRSNQGTCYNQRPIVSVGDEVVKGEILADGPSMELGELALGRNVMVGFMTWDGYNYEDAIIMSERLVKDDVYTSIHIEEYESEARDTKLGPEEITRDIPNVGEDALRNLDDRGIIRIGAEVKDGDLLVGKVTPKGVTELTAEERLLHAIFGEKAREVRDTSLRVPHGGGGIIHDVKVFNREDGDELPPGVNQLVRVYIVQKRKISEGDKMAGRHGNKGVISKILPEEDMPYLPDGTPIDIMLNPLGVPSRMNIGQVLELHMGMAARYLGIHIASPVFDGAREEDVWETLEEAGMSRDAKTVLYDGRTGEPFDNRVSVGIMYMIKLAHMVDDKLHARSTGPYSLVTQQPLGGKAQFGGQRFGEMEVWALEAYGAAYTLQEILTVKSDDVVGRVKTYEAIVKGDNVPEPGVPESFKVLIKELQSLGMDVKILSGDEEEIEMRDLEDEEDAKQADGLALSGDEEPEETASADVERDVVTKE.

Positions 1149–1162 (EEEIEMRDLEDEED) are enriched in acidic residues. Positions 1149 to 1193 (EEEIEMRDLEDEEDAKQADGLALSGDEEPEETASADVERDVVTKE) are disordered. Residues 1184–1193 (DVERDVVTKE) are compositionally biased toward basic and acidic residues.

It belongs to the RNA polymerase beta chain family. RNAP is composed of a core of 2 alpha, a beta and a beta' subunit. The core is associated with a delta subunit, and at least one of epsilon or omega. When a sigma factor is associated with the core the holoenzyme is formed, which can initiate transcription.

The enzyme catalyses RNA(n) + a ribonucleoside 5'-triphosphate = RNA(n+1) + diphosphate. DNA-dependent RNA polymerase catalyzes the transcription of DNA into RNA using the four ribonucleoside triphosphates as substrates. This chain is DNA-directed RNA polymerase subunit beta, found in Bacillus subtilis (strain 168).